The primary structure comprises 397 residues: DNA-directed RNA polymerase subunit Rpo1C (397 aa).

This sequence belongs to the RNA polymerase beta' chain family. Part of the RNA polymerase complex.

The protein localises to the cytoplasm. The catalysed reaction is RNA(n) + a ribonucleoside 5'-triphosphate = RNA(n+1) + diphosphate. DNA-dependent RNA polymerase (RNAP) catalyzes the transcription of DNA into RNA using the four ribonucleoside triphosphates as substrates. Forms part of the jaw domain. This chain is DNA-directed RNA polymerase subunit Rpo1C, found in Pyrococcus abyssi (strain GE5 / Orsay).